Reading from the N-terminus, the 1427-residue chain is A disintegrin and metalloproteinase with thrombospondin motifs 13 (1427 aa).

The signal sequence occupies residues 1 to 29 (MHQRHPRARCPPLCVAGILACGFLLGCWG). Residues 30–74 (PSHFQQSCLQALEPQAVSSYLSPGAPLKGRPPSPGFQRQRQRQRR) constitute a propeptide that is removed on maturation. The disordered stretch occupies residues 51 to 70 (SPGAPLKGRPPSPGFQRQRQ). The region spanning 80 to 286 (LHLELLVAVG…GRARCVWDPP (207 aa)) is the Peptidase M12B domain. Position 83 (Glu83) interacts with Ca(2+). Asn142 and Asn146 each carry an N-linked (GlcNAc...) asparagine glycan. 3 disulfides stabilise this stretch: Cys155–Cys208, Cys202–Cys281, and Cys242–Cys265. 5 residues coordinate Ca(2+): Asp173, Asp182, Glu184, Asp187, and Glu212. Position 224 (His224) interacts with Zn(2+). The active site involves Glu225. 2 residues coordinate Zn(2+): His228 and His234. Ca(2+)-binding residues include Cys281 and Asp284. Residues 287–383 (RPQPGSAGHP…LVELTPIAAV (97 aa)) form the Disintegrin domain. Disulfide bonds link Cys311/Cys337, Cys322/Cys347, Cys332/Cys366, and Cys360/Cys371. The TSP type-1 1 domain occupies 384–439 (HGRWSSWGPRSPCSRSCGGGVVTRRRQCNNPRPAFGGRACVGADLQAEMCNTQACE). C-linked (Man) tryptophan glycosylation occurs at Trp387. 8 disulfides stabilise this stretch: Cys396/Cys433, Cys400/Cys438, Cys411/Cys423, Cys450/Cys487, Cys483/Cys522, Cys508/Cys527, Cys532/Cys548, and Cys545/Cys555. The O-linked (Fuc...) serine glycan is linked to Ser399. The interval 440–556 (KTQLEFMSQQ…VCGGDNSTCS (117 aa)) is cysteine-rich. The Cell attachment site signature appears at 498–500 (RGD). Residues Asn552, Asn579, and Asn614 are each glycosylated (N-linked (GlcNAc...) asparagine). Residues 556-685 (SPRKGSFTAG…TYFQPKPRQA (130 aa)) are spacer. Residue Asn667 is glycosylated (N-linked (GlcNAc...) (complex) asparagine). TSP type-1 domains are found at residues 682 to 730 (PRQA…SQQP), 742 to 805 (CPPY…QPCP), 808 to 859 (WEVS…PEPC), 896 to 950 (VWTP…QAVP), 951 to 1011 (CPAR…SLEP), 1012 to 1068 (CPPR…VPCL), and 1072 to 1131 (CTYR…GPCV). An O-linked (Fuc...) serine glycan is attached at Ser698. An N-linked (GlcNAc...) (complex) asparagine glycan is attached at Asn707. O-linked (Fuc...) serine glycosylation occurs at Ser757. Residue Asn828 is glycosylated (N-linked (GlcNAc...) asparagine). Ser907, Ser965, Ser1027, and Ser1087 each carry an O-linked (Fuc...) serine glycan. CUB domains lie at 1192–1298 (CGRQ…FYRE) and 1299–1427 (CDMQ…KEGT). Residues Asn1235 and Asn1354 are each glycosylated (N-linked (GlcNAc...) asparagine).

It depends on Zn(2+) as a cofactor. Requires Ca(2+) as cofactor. Post-translationally, glycosylated. O-fucosylated by POFUT2 on a serine or a threonine residue found within the consensus sequence C1-X(2)-(S/T)-C2-G of the TSP type-1 repeat domains where C1 and C2 are the first and second cysteine residue of the repeat, respectively. Fucosylated repeats can then be further glycosylated by the addition of a beta-1,3-glucose residue by the glucosyltransferase, B3GALTL. Fucosylation mediates the efficient secretion of ADAMTS13. May also be C-glycosylated on tryptophan residues within the consensus sequence W-X-X-W of the TPRs, and also N-glycosylated. These other glycosylations can also facilitate secretion. In terms of processing, the precursor is processed by a furin endopeptidase which cleaves off the pro-domain. In terms of tissue distribution, plasma. Expressed primarily in liver.

It localises to the secreted. It carries out the reaction The enzyme cleaves the von Willebrand factor at bond 842-Tyr-|-Met-843 within the A2 domain.. With respect to regulation, zinc and calcium ions cooperatively modulate enzyme activity. The cleavage of the pro-domain is not required for protease activity. Dependence on calcium for proteolytic activity is mediated by the high affinity site. In terms of biological role, cleaves the vWF multimers in plasma into smaller forms thereby controlling vWF-mediated platelet thrombus formation. In Homo sapiens (Human), this protein is A disintegrin and metalloproteinase with thrombospondin motifs 13 (ADAMTS13).